Reading from the N-terminus, the 379-residue chain is Protein RecA (379 aa).

The disordered stretch occupies residues 1–23; it reads MSVDVKSAQSSKSDSLQVEPRPG. A compositionally biased stretch (polar residues) spans 7–16; sequence SAQSSKSDSL. 84–91 is an ATP binding site; sequence GPESSGKT.

It belongs to the RecA family.

Its subcellular location is the cytoplasm. Can catalyze the hydrolysis of ATP in the presence of single-stranded DNA, the ATP-dependent uptake of single-stranded DNA by duplex DNA, and the ATP-dependent hybridization of homologous single-stranded DNAs. It interacts with LexA causing its activation and leading to its autocatalytic cleavage. This Prochlorococcus marinus (strain MIT 9313) protein is Protein RecA.